We begin with the raw amino-acid sequence, 292 residues long: Complex I assembly factor TIMMDC1, mitochondrial (292 aa).

A run of 2 helical transmembrane segments spans residues 146 to 168 (WSWR…TVYR) and 195 to 215 (GLLS…VLIL).

Belongs to the Tim17/Tim22/Tim23 family. Associates with the intermediate 315 kDa subcomplex of incompletely assembled complex I.

The protein localises to the mitochondrion membrane. In terms of biological role, chaperone protein involved in the assembly of the mitochondrial NADH:ubiquinone oxidoreductase complex (complex I). Participates in constructing the membrane arm of complex I. The sequence is that of Complex I assembly factor TIMMDC1, mitochondrial (timmdc1) from Danio rerio (Zebrafish).